Consider the following 221-residue polypeptide: ATP-dependent dethiobiotin synthetase BioD (221 aa).

11-16 (DIGKTL) lines the ATP pocket. Thr15 provides a ligand contact to Mg(2+). Lys35 is an active-site residue. Residue Thr39 coordinates substrate. Residues Asp44 and 103-106 (EGAG) each bind ATP. Asp44 and Glu103 together coordinate Mg(2+).

It belongs to the dethiobiotin synthetase family. In terms of assembly, homodimer. The cofactor is Mg(2+).

It localises to the cytoplasm. The enzyme catalyses (7R,8S)-7,8-diammoniononanoate + CO2 + ATP = (4R,5S)-dethiobiotin + ADP + phosphate + 3 H(+). It functions in the pathway cofactor biosynthesis; biotin biosynthesis; biotin from 7,8-diaminononanoate: step 1/2. Functionally, catalyzes a mechanistically unusual reaction, the ATP-dependent insertion of CO2 between the N7 and N8 nitrogen atoms of 7,8-diaminopelargonic acid (DAPA, also called 7,8-diammoniononanoate) to form a ureido ring. This Leptospira borgpetersenii serovar Hardjo-bovis (strain L550) protein is ATP-dependent dethiobiotin synthetase BioD.